A 106-amino-acid polypeptide reads, in one-letter code: Toxin-like structure LSTX-D5 (106 aa).

A signal peptide spans 1 to 20; sequence MMKVLVVVALLVTLISYSSS. Positions 21-41 are excised as a propeptide; sequence EGIDDLETDELLSLMANEQTR. 4 disulfide bridges follow: C45-C60, C52-C69, C59-C85, and C71-C83.

This sequence belongs to the neurotoxin 19 (CSTX) family. 02 (D7) subfamily. In terms of tissue distribution, expressed by the venom gland.

The protein localises to the secreted. The protein is Toxin-like structure LSTX-D5 of Lycosa singoriensis (Wolf spider).